Here is a 473-residue protein sequence, read N- to C-terminus: Phosphatidylserine synthase 1 (473 aa).

Residue A2 is modified to N-acetylalanine. The Cytoplasmic portion of the chain corresponds to 2 to 35; that stretch reads ASCVGSRTLSKDDVNYRMHFRMINEQQVEDITID. Residues 36–56 form a helical membrane-spanning segment; that stretch reads FFYRPHTITLLSFTIISLMYF. Over 57-72 the chain is Lumenal; sequence AFTRDDCVPEDNIWRG. A helical membrane pass occupies residues 73 to 93; sequence ILSVIFFFLIISVLAFPNGPF. Residues 94–102 are Cytoplasmic-facing; sequence TRPHPALWR. Residues 103–123 traverse the membrane as a helical segment; the sequence is MVFGLSVLYFLFLVFLLFLNF. Residues 124–186 lie on the Lumenal side of the membrane; it reads EQVKSLMYWL…AMKALLIRSY (63 aa). The helical transmembrane segment at 187 to 207 threads the bilayer; that stretch reads GLCWTISITWELTELFFMHLL. The Cytoplasmic segment spans residues 208 to 216; the sequence is PNFAECWWD. A helical membrane pass occupies residues 217 to 237; the sequence is QVILDILLCNGGGIWLGMVVC. At 238 to 286 the chain is on the lumenal side; sequence RFLEMRTYHWASFKDIHTTTGKIKRAVLQFTPASWTYVRWFDPKSSFQR. Residues 287–307 form a helical membrane-spanning segment; sequence VAGIYLFMIIWQLTELNTFFL. Residues 308–319 lie on the Cytoplasmic side of the membrane; that stretch reads KHIFVFQASHPL. Residues 320–342 traverse the membrane as a helical segment; sequence SWCRILFIGCITAPTVRQYYAYL. Residues 343 to 355 lie on the Lumenal side of the membrane; sequence TDTQCKRVGTQCW. A helical membrane pass occupies residues 356 to 376; that stretch reads VFGVIGFLEAIVCIKFGQDLF. At 377–383 the chain is on the cytoplasmic side; the sequence is SKTQILY. The chain crosses the membrane as a helical span at residues 384–404; the sequence is VVLWLLCVAFTTFLCLYGMVW. At 405 to 473 the chain is on the lumenal side; sequence YAEHYGHREK…SKVTNGVGKK (69 aa). 4 positions are modified to phosphoserine: S417, S425, S442, and S454. The tract at residues 430 to 473 is disordered; sequence WYHGKGSKGSEDSPPKHSNNNESHSSRRRNRHSKSKVTNGVGKK. The span at 455 to 464 shows a compositional bias: basic residues; the sequence is SRRRNRHSKS.

It belongs to the phosphatidyl serine synthase family.

It localises to the endoplasmic reticulum membrane. It carries out the reaction a 1,2-diacyl-sn-glycero-3-phosphoethanolamine + L-serine = a 1,2-diacyl-sn-glycero-3-phospho-L-serine + ethanolamine. The enzyme catalyses a 1,2-diacyl-sn-glycero-3-phosphocholine + L-serine = a 1,2-diacyl-sn-glycero-3-phospho-L-serine + choline. Its pathway is phospholipid metabolism; phosphatidylserine biosynthesis. In terms of biological role, catalyzes a base-exchange reaction in which the polar head group of phosphatidylethanolamine (PE) or phosphatidylcholine (PC) is replaced by L-serine. Catalyzes mainly the conversion of phosphatidylcholine but also converts, in vitro and to a lesser extent, phosphatidylethanolamine. The polypeptide is Phosphatidylserine synthase 1 (Ptdss1) (Rattus norvegicus (Rat)).